The following is a 565-amino-acid chain: Berberine bridge enzyme-like C-2 (565 aa).

The first 17 residues, 1 to 17 (MFPIIILISFSFTFLFA), serve as a signal peptide directing secretion. N-linked (GlcNAc...) asparagine glycosylation is found at N28 and N40. C32 and C94 are disulfide-bonded. Residues 72 to 248 (YMPKPTVIIL…YAWKIRLLKV (177 aa)) enclose the FAD-binding PCMH-type domain. H109 carries the pros-8alpha-FAD histidine modification. N-linked (GlcNAc...) asparagine glycans are attached at residues N363 and N502.

The protein belongs to the oxygen-dependent FAD-linked oxidoreductase family. FAD serves as cofactor.

It localises to the vacuole. It functions in the pathway alkaloid biosynthesis; nicotine biosynthesis. In terms of biological role, involved in the biosynthesis of pyridine alkaloid natural products, leading mainly to the production of anabasine, anatabine, nicotine and nornicotine, effective deterrents against herbivores with antiparasitic and pesticide properties (neurotoxins); nornicotine serves as the precursor in the synthesis of the carcinogen compound N'-nitrosonornicotine (NNN). Catalyzes a late oxidation step subsequent to the pyridine ring condensation reaction in the biosynthesis of alkaloids. This Nicotiana tabacum (Common tobacco) protein is Berberine bridge enzyme-like C-2.